The following is a 434-amino-acid chain: D-amino acid dehydrogenase (434 aa).

FAD is bound at residue 3–17 (VIILGGGVIGVTSAW).

It belongs to the DadA oxidoreductase family. FAD serves as cofactor.

The catalysed reaction is a D-alpha-amino acid + A + H2O = a 2-oxocarboxylate + AH2 + NH4(+). Its pathway is amino-acid degradation; D-alanine degradation; NH(3) and pyruvate from D-alanine: step 1/1. Oxidative deamination of D-amino acids. The protein is D-amino acid dehydrogenase of Proteus mirabilis (strain HI4320).